The following is a 209-amino-acid chain: Imidazoleglycerol-phosphate dehydratase (209 aa).

The segment at 1 to 23 (MQLSDRPLTAPGTAPRQATVSRR) is disordered.

The protein belongs to the imidazoleglycerol-phosphate dehydratase family.

It localises to the cytoplasm. It carries out the reaction D-erythro-1-(imidazol-4-yl)glycerol 3-phosphate = 3-(imidazol-4-yl)-2-oxopropyl phosphate + H2O. It participates in amino-acid biosynthesis; L-histidine biosynthesis; L-histidine from 5-phospho-alpha-D-ribose 1-diphosphate: step 6/9. In Synechococcus elongatus (strain ATCC 33912 / PCC 7942 / FACHB-805) (Anacystis nidulans R2), this protein is Imidazoleglycerol-phosphate dehydratase.